The chain runs to 424 residues: MELTQENTEENEKTHVESIVKFEDSNRGTITDFHIETANNEEEKDANVILNKSVKMEVEEVNGHVDSSSTETDIEMQVIQQPTIPKKPPVSAHRRGPRKHRGNANSQLNLSTADHQRPLYCICQKPDDGSWMLGCDGCEDWFHGTCVNIPESYNDLTVQYFCPKCTEEGKGITTWKRKCRLRECSNPTRPNSNYCSDKHGVDFFREKVKLSTVEPSAIKNLVLFAKKREEFQNLGTVGPTLPSQVPPEVVYNFEIEEANRLNAEIVQLNKEKEVASNKKIFLQLIKDSSRRAVLAYKEREGIKKDLCGFDSRLLFNQQQMNELWEKVSNGAPLSLDMSIDPSPESTCFTEKRRCAKHTSWQVIFTEDFELQESNILQKLNMKQTAKDVMLEHQKQRCLPGIQYDGYARFCHEQLSPEKMANLLK.

The interval 80–108 (QQPTIPKKPPVSAHRRGPRKHRGNANSQL) is disordered. The span at 92-102 (AHRRGPRKHRG) shows a compositional bias: basic residues. The segment at 118-168 (PLYCICQKPDDGSWMLGCDGCEDWFHGTCVNIPESYNDLTVQYFCPKCTEE) adopts a PHD-type zinc-finger fold.

As to quaternary structure, component of the Set1 complex composed of ash2, sdc1, set1, shg1, spp1, swd1, swd2 and swd3.

Its subcellular location is the nucleus. Its function is as follows. The Set1 complex specifically methylates 'Lys-4' of histone H3. The sequence is that of Set1 complex component spp1 (spp1) from Schizosaccharomyces pombe (strain 972 / ATCC 24843) (Fission yeast).